The sequence spans 59 residues: Embryonic testis differentiation protein homolog A (59 aa).

The span at 1 to 10 shows a compositional bias: basic and acidic residues; it reads MDKEVPKGSP. A disordered region spans residues 1-25; it reads MDKEVPKGSPREPALNIKKSDKSFK.

The sequence is that of Embryonic testis differentiation protein homolog A from Homo sapiens (Human).